The chain runs to 316 residues: GTP cyclohydrolase FolE2 2 (316 aa).

This sequence belongs to the GTP cyclohydrolase IV family.

The enzyme catalyses GTP + H2O = 7,8-dihydroneopterin 3'-triphosphate + formate + H(+). The protein operates within cofactor biosynthesis; 7,8-dihydroneopterin triphosphate biosynthesis; 7,8-dihydroneopterin triphosphate from GTP: step 1/1. Its function is as follows. Converts GTP to 7,8-dihydroneopterin triphosphate. The polypeptide is GTP cyclohydrolase FolE2 2 (Burkholderia orbicola (strain MC0-3)).